We begin with the raw amino-acid sequence, 393 residues long: tRNA (guanine-N(7)-)-methyltransferase (393 aa).

Positions 124, 149, and 176 each coordinate S-adenosyl-L-methionine. Asp-232 provides a ligand contact to substrate.

It belongs to the class I-like SAM-binding methyltransferase superfamily. TrmB family.

It catalyses the reaction guanosine(46) in tRNA + S-adenosyl-L-methionine = N(7)-methylguanosine(46) in tRNA + S-adenosyl-L-homocysteine. The protein operates within tRNA modification; N(7)-methylguanine-tRNA biosynthesis. Its function is as follows. Catalyzes the formation of N(7)-methylguanine at position 46 (m7G46) in tRNA. This Helicobacter pylori (strain HPAG1) protein is tRNA (guanine-N(7)-)-methyltransferase.